We begin with the raw amino-acid sequence, 583 residues long: uncharacterized protein (583 aa).

24–140 provides a ligand contact to a nucleoside 3',5'-cyclic phosphate; sequence ILADIDDEQL…SAMLRAMARM (117 aa). Positions 309-469 constitute a PNPLA domain; it reads LVMAGGGARG…LNNLPANVMC (161 aa). Positions 313–318 match the GXGXXG motif; it reads GGGARG. The short motif at 340-344 is the GXSXG element; the sequence is GTSSG. The Nucleophile role is filled by S342. The active-site Proton acceptor is the D456. The DGA/G motif lies at 456–458; the sequence is DGG.

This sequence belongs to the NTE family.

This is an uncharacterized protein from Mycobacterium bovis (strain ATCC BAA-935 / AF2122/97).